Here is a 477-residue protein sequence, read N- to C-terminus: UDP-N-acetylglucosamine pyrophosphorylase (477 aa).

Positions 109–112 match the Substrate binding motif; sequence MAGG. UTP contacts are provided by residues 109–112, lysine 123, and glutamine 194; that span reads MAGG. Residue serine 218 is modified to Phosphoserine. Glycine 221 lines the UTP pocket. A substrate-binding site is contributed by asparagine 222. A UTP-binding site is contributed by aspartate 252. The Substrate binding signature appears at 302 to 303; that stretch reads EY. Position 377 (lysine 377) interacts with UTP. Residue lysine 409 coordinates substrate. Phosphoserine is present on serine 461.

This sequence belongs to the UDPGP type 1 family.

It localises to the cytoplasm. The catalysed reaction is N-acetyl-alpha-D-glucosamine 1-phosphate + UTP + H(+) = UDP-N-acetyl-alpha-D-glucosamine + diphosphate. Its pathway is nucleotide-sugar biosynthesis; UDP-N-acetyl-alpha-D-glucosamine biosynthesis; UDP-N-acetyl-alpha-D-glucosamine from N-acetyl-alpha-D-glucosamine 1-phosphate: step 1/1. UDP-N-acetylglucosamine pyrophosphorylase that utilizes N-acetylglucosamine-1-phosphate as substrate. Together with AGM1, is involved in the production of UDP-N-acetylglucosamine from N-acetylglucosamine-6-phosphate. In Saccharomyces cerevisiae (strain ATCC 204508 / S288c) (Baker's yeast), this protein is UDP-N-acetylglucosamine pyrophosphorylase (QRI1).